The chain runs to 418 residues: AP-3 complex subunit mu-1 (418 aa).

The 242-residue stretch at 176–417 folds into the MHD domain; it reads NNEAYFDVVE…VTKAGKFQVR (242 aa).

Belongs to the adaptor complexes medium subunit family. Adaptor protein complex 3 (AP-3) is a heterotetramer composed of two large adaptins (delta-type subunit AP3D1 and beta-type subunit AP3B1 or AP3B2), a medium adaptin (mu-type subunit AP3M1 or AP3M2) and a small adaptin (sigma-type subunit APS1 or AP3S2). Interacts with AGAP1. AP-3 associates with the BLOC-1 complex.

The protein localises to the golgi apparatus. It localises to the cytoplasmic vesicle membrane. Its function is as follows. Part of the AP-3 complex, an adaptor-related complex which is not clathrin-associated. The complex is associated with the Golgi region as well as more peripheral structures. It facilitates the budding of vesicles from the Golgi membrane and may be directly involved in trafficking to lysosomes. In concert with the BLOC-1 complex, AP-3 is required to target cargos into vesicles assembled at cell bodies for delivery into neurites and nerve terminals. This Mus musculus (Mouse) protein is AP-3 complex subunit mu-1 (Ap3m1).